A 368-amino-acid polypeptide reads, in one-letter code: Zinc finger protein 24 (368 aa).

Residue lysine 22 forms a Glycyl lysine isopeptide (Lys-Gly) (interchain with G-Cter in SUMO2) linkage. A Glycyl lysine isopeptide (Lys-Gly) (interchain with G-Cter in SUMO1); alternate cross-link involves residue lysine 27. A Glycyl lysine isopeptide (Lys-Gly) (interchain with G-Cter in SUMO2); alternate cross-link involves residue lysine 27. The SCAN box domain occupies 52–134; sequence RQRFRQFGYQ…AVLEDLESEL (83 aa). 2 positions are modified to phosphoserine: serine 132 and serine 142. Residues lysine 147, lysine 177, and lysine 236 each participate in a glycyl lysine isopeptide (Lys-Gly) (interchain with G-Cter in SUMO2) cross-link. The segment at 251–273 adopts a C2H2-type 1 zinc-finger fold; it reads HICDECGKHFSQGSALILHQRIH. The interval 251–301 is necessary and sufficient for nuclear localization; the sequence is HICDECGKHFSQGSALILHQRIHSGEKPYGCVECGKAFSRSSILVQHQRVH. At serine 274 the chain carries Phosphoserine. Glycyl lysine isopeptide (Lys-Gly) (interchain with G-Cter in SUMO2) cross-links involve residues lysine 277 and lysine 286. 3 consecutive C2H2-type zinc fingers follow at residues 279–301, 307–329, and 335–357; these read YGCV…QRVH, YKCL…QRIH, and YECV…QRRH. At serine 292 the chain carries Phosphoserine. Residue tyrosine 335 is modified to Phosphotyrosine. Glycyl lysine isopeptide (Lys-Gly) (interchain with G-Cter in SUMO2) cross-links involve residues lysine 361 and lysine 367.

It belongs to the krueppel C2H2-type zinc-finger protein family. Post-translationally, sumoylated. Widely expressed with highest levels in heart, brain, liver, skeletal muscle, kidney and testis and very low levels in spleen and lung.

The protein localises to the nucleus. Its function is as follows. Transcription factor required for myelination of differentiated oligodendrocytes. Required for the conversion of oligodendrocytes from the premyelinating to the myelinating state. In the developing central nervous system (CNS), involved in the maintenance in the progenitor stage by promoting the cell cycle. Specifically binds to the 5'-TCAT-3' DNA sequence. Has transcription repressor activity in vitro. The polypeptide is Zinc finger protein 24 (Mus musculus (Mouse)).